The chain runs to 401 residues: Argininosuccinate synthase (401 aa).

Residue 9 to 17 (AYSGGLDTS) coordinates ATP. Position 87 (Tyr87) interacts with L-citrulline. Gly117 lines the ATP pocket. Thr119, Asn123, and Asp124 together coordinate L-aspartate. An L-citrulline-binding site is contributed by Asn123. Arg127, Ser176, Ser185, Glu261, and Tyr273 together coordinate L-citrulline.

It belongs to the argininosuccinate synthase family. Type 1 subfamily. Homotetramer.

The protein localises to the cytoplasm. The catalysed reaction is L-citrulline + L-aspartate + ATP = 2-(N(omega)-L-arginino)succinate + AMP + diphosphate + H(+). It functions in the pathway amino-acid biosynthesis; L-arginine biosynthesis; L-arginine from L-ornithine and carbamoyl phosphate: step 2/3. This chain is Argininosuccinate synthase, found in Prosthecochloris aestuarii (strain DSM 271 / SK 413).